The chain runs to 697 residues: Polyribonucleotide nucleotidyltransferase (697 aa).

The Mg(2+) site is built by aspartate 488 and aspartate 494. A KH domain is found at 555–614 (PTFEVITINPDKIRDVIGKGGATIRQITEETKAAIDIEDNGTVRVFGETKAAAKAAIAKI). The S1 motif domain occupies 624-692 (GKIYDGKVIR…NRGRIKLTMK (69 aa)).

This sequence belongs to the polyribonucleotide nucleotidyltransferase family. As to quaternary structure, component of the RNA degradosome, which is a multiprotein complex involved in RNA processing and mRNA degradation. Requires Mg(2+) as cofactor.

It localises to the cytoplasm. It carries out the reaction RNA(n+1) + phosphate = RNA(n) + a ribonucleoside 5'-diphosphate. Functionally, involved in mRNA degradation. Catalyzes the phosphorolysis of single-stranded polyribonucleotides processively in the 3'- to 5'-direction. The protein is Polyribonucleotide nucleotidyltransferase of Acinetobacter baumannii (strain AB307-0294).